The following is a 358-amino-acid chain: Very long chain fatty acid elongase AAEL008004 (358 aa).

Transmembrane regions (helical) follow at residues 26–46, 66–86, 115–135, 147–167, 171–191, 207–227, and 234–254; these read WPLM…VYLV, LILY…EIGI, ACWW…FFVM, VIHH…TPGG, FFGL…LFTA, TSLQ…LLFI, and AFVW…NEFY. The span at 285–295 shows a compositional bias: polar residues; sequence SAVSSNGSAIT. Positions 285-322 are disordered; it reads SAVSSNGSAITANGHHGKNGSVHHHSNGSATSNGTSLL. Residues 299-310 are compositionally biased toward basic residues; the sequence is HHGKNGSVHHHS. A compositionally biased stretch (polar residues) spans 311–322; sequence NGSATSNGTSLL.

Belongs to the ELO family.

The protein resides in the membrane. The enzyme catalyses a very-long-chain acyl-CoA + malonyl-CoA + H(+) = a very-long-chain 3-oxoacyl-CoA + CO2 + CoA. Could be implicated in synthesis of very long chain fatty acids. The polypeptide is Very long chain fatty acid elongase AAEL008004 (Aedes aegypti (Yellowfever mosquito)).